A 298-amino-acid chain; its full sequence is tRNA-cytidine(32) 2-sulfurtransferase (298 aa).

Positions 1 to 26 (MTAVISLPDPPQRASRGPRVAGPGQD) are disordered. Residues 57–62 (SGGKDS) carry the PP-loop motif motif. [4Fe-4S] cluster contacts are provided by Cys-132, Cys-135, and Cys-223.

Belongs to the TtcA family. In terms of assembly, homodimer. Mg(2+) is required as a cofactor. [4Fe-4S] cluster serves as cofactor.

It localises to the cytoplasm. It catalyses the reaction cytidine(32) in tRNA + S-sulfanyl-L-cysteinyl-[cysteine desulfurase] + AH2 + ATP = 2-thiocytidine(32) in tRNA + L-cysteinyl-[cysteine desulfurase] + A + AMP + diphosphate + H(+). Its pathway is tRNA modification. Its function is as follows. Catalyzes the ATP-dependent 2-thiolation of cytidine in position 32 of tRNA, to form 2-thiocytidine (s(2)C32). The sulfur atoms are provided by the cysteine/cysteine desulfurase (IscS) system. This Stenotrophomonas maltophilia (strain R551-3) protein is tRNA-cytidine(32) 2-sulfurtransferase.